The chain runs to 43 residues: METATVLIVFIASLLLGVTGYSVYTAFGPNSKDLRDPFEDHED.

The helical transmembrane segment at 7–27 threads the bilayer; it reads LIVFIASLLLGVTGYSVYTAF.

Belongs to the PsbN family.

The protein resides in the plastid. It is found in the chloroplast thylakoid membrane. Its function is as follows. May play a role in photosystem I and II biogenesis. In Rhodomonas salina (Cryptomonas salina), this protein is Protein PsbN.